The primary structure comprises 108 residues: uncharacterized protein (108 aa).

Residue Asn33 is glycosylated (N-linked (GlcNAc...) asparagine).

N-glycosylated.

This is an uncharacterized protein from Saccharomyces cerevisiae (strain ATCC 204508 / S288c) (Baker's yeast).